Here is a 297-residue protein sequence, read N- to C-terminus: 4-hydroxy-tetrahydrodipicolinate synthase (297 aa).

Threonine 49 contacts pyruvate. Tyrosine 137 functions as the Proton donor/acceptor in the catalytic mechanism. Lysine 166 functions as the Schiff-base intermediate with substrate in the catalytic mechanism. Isoleucine 208 contacts pyruvate.

This sequence belongs to the DapA family. Homotetramer; dimer of dimers.

Its subcellular location is the cytoplasm. The enzyme catalyses L-aspartate 4-semialdehyde + pyruvate = (2S,4S)-4-hydroxy-2,3,4,5-tetrahydrodipicolinate + H2O + H(+). It functions in the pathway amino-acid biosynthesis; L-lysine biosynthesis via DAP pathway; (S)-tetrahydrodipicolinate from L-aspartate: step 3/4. Its function is as follows. Catalyzes the condensation of (S)-aspartate-beta-semialdehyde [(S)-ASA] and pyruvate to 4-hydroxy-tetrahydrodipicolinate (HTPA). The protein is 4-hydroxy-tetrahydrodipicolinate synthase of Prosthecochloris aestuarii (strain DSM 271 / SK 413).